The chain runs to 252 residues: Reaction center protein L chain (252 aa).

3 consecutive transmembrane segments (helical) span residues 8-30 (FFGV…GAAL), 58-86 (GGLW…SRKL), and 91-113 (HVPA…RPLL). (7R,8Z)-bacteriochlorophyll b is bound by residues His128 and His148. The chain crosses the membrane as a helical span at residues 146 to 173 (PMHMVAVTLFFTTTLALALHGSLVLAAI). His165 contributes to the Fe cation binding site. Residue Phe191 participates in a ubiquinone binding. Residues 200 to 225 (GTLGIHRLGLFLALGAGFASATCILL) traverse the membrane as a helical segment. Fe cation is bound at residue His205.

Belongs to the reaction center PufL/M/PsbA/D family. As to quaternary structure, reaction center is composed of four bacteriochlorophylls, two bacteriopheophytins, two ubiquinones, one iron, and two highly hydrophobic polypeptide chains (designated L and M).

It is found in the cell inner membrane. In terms of biological role, the reaction center is a membrane-bound complex that mediates the initial photochemical event in the electron transfer process of photosynthesis. This is Reaction center protein L chain (pufL) from Acidiphilium cryptum.